The chain runs to 312 residues: Small ribosomal subunit protein uS2 (312 aa).

This sequence belongs to the universal ribosomal protein uS2 family. As to quaternary structure, component of the small ribosomal subunit. Mature ribosomes consist of a small (40S) and a large (60S) subunit. The 40S subunit contains about 33 different proteins and 1 molecule of RNA (18S). The 60S subunit contains about 49 different proteins and 3 molecules of RNA (25S, 5.8S and 5S). Interacts with ribosomal protein S21.

The protein localises to the cytoplasm. Required for the assembly and/or stability of the 40S ribosomal subunit. Required for the processing of the 20S rRNA-precursor to mature 18S rRNA in a late step of the maturation of 40S ribosomal subunits. The sequence is that of Small ribosomal subunit protein uS2 from Vitis vinifera (Grape).